Here is a 368-residue protein sequence, read N- to C-terminus: Glutamate 5-kinase (368 aa).

Lys-13 contributes to the ATP binding site. Substrate contacts are provided by Ser-54, Asp-141, and Asn-153. ATP is bound at residue 173–174 (SD). A PUA domain is found at 278 to 355 (RGEITVDAGA…AEIEAVLGYP (78 aa)).

Belongs to the glutamate 5-kinase family.

It localises to the cytoplasm. It catalyses the reaction L-glutamate + ATP = L-glutamyl 5-phosphate + ADP. It participates in amino-acid biosynthesis; L-proline biosynthesis; L-glutamate 5-semialdehyde from L-glutamate: step 1/2. Functionally, catalyzes the transfer of a phosphate group to glutamate to form L-glutamate 5-phosphate. This is Glutamate 5-kinase from Dinoroseobacter shibae (strain DSM 16493 / NCIMB 14021 / DFL 12).